The primary structure comprises 1385 residues: Serine-aspartate repeat-containing protein D (1385 aa).

Positions 1-35 (MLNRENKTAITRKGMVSNRLNKFSIRKYTVGTASI) are cleaved as a signal peptide. Residues 23–34 (FSIRKYTVGTAS) carry the YSIRK-G/S signaling motif motif. The segment at 36 to 568 (LVGTTLIFGL…NNQSGGAGQE (533 aa)) is ligand binding A region. 2 disordered regions span residues 54-162 (ESTN…DLLE) and 200-224 (ETLVDNNSNSNNENNADIILPKSTA). Composition is skewed to polar residues over residues 62–71 (EATTSASDNQ) and 94–109 (EMVSSQGNETTSNGNK). Residues 130–145 (KSDEQASPKSTNEDLN) are compositionally biased toward basic and acidic residues. The span at 146–155 (TKQTISNQEG) shows a compositional bias: polar residues. Residues 205–214 (NNSNSNNENN) are compositionally biased toward low complexity. 5 consecutive CNA-B domains span residues 569-680 (VYKI…IYKP), 681-791 (KYNL…YKTP), 792-901 (KYNL…FYKP), 902-1012 (TYNL…YKTP), and 1013-1123 (KYSL…EEET). Disordered regions lie at residues 856–886 (FETPSGYTPTQVGSGTDEGIDSNGTSTTGVI), 972–992 (YTPTSVTSGNDTEKDSNGLTT), and 1077–1361 (FEKP…SNNA). 2 stretches are compositionally biased toward polar residues: residues 860 to 869 (SGYTPTQVGS) and 972 to 981 (YTPTSVTSGN). A compositionally biased stretch (low complexity) spans 1081-1090 (TGLTQTGTNT). 2 stretches are compositionally biased toward acidic residues: residues 1091–1101 (TEDDKDADGGE) and 1118–1324 (YYEE…DSDS). Residues 1348-1352 (LPETG) carry the LPXTG sorting signal motif. Thr-1351 is modified (pentaglycyl murein peptidoglycan amidated threonine). Residues 1352 to 1385 (GNENSGSNNATLFGGLFAALGSLLLFGRRKKQNK) constitute a propeptide, removed by sortase.

This sequence belongs to the serine-aspartate repeat-containing protein (SDr) family. As to quaternary structure, interacts with host DSG1; this interaction increases S.aureus adherence to keratinocytes.

The protein resides in the secreted. It is found in the cell wall. Its function is as follows. Cell surface-associated calcium-binding protein which plays an important role in adhesion and pathogenesis. Mediates interactions with components of the extracellular matrix such as host DSG1 to promote bacterial adhesion to host cells. Contributes to the resistance to killing by innate immune components such as neutrophils present in blood and thus attenuates bacterial clearance. This Staphylococcus aureus (strain Mu50 / ATCC 700699) protein is Serine-aspartate repeat-containing protein D (sdrD).